Consider the following 284-residue polypeptide: L-ribulose-5-phosphate 3-epimerase UlaE (284 aa).

Belongs to the L-ribulose-5-phosphate 3-epimerase family.

It carries out the reaction L-ribulose 5-phosphate = L-xylulose 5-phosphate. Its pathway is cofactor degradation; L-ascorbate degradation; D-xylulose 5-phosphate from L-ascorbate: step 3/4. In terms of biological role, catalyzes the isomerization of L-xylulose-5-phosphate to L-ribulose-5-phosphate. Is involved in the anaerobic L-ascorbate utilization. The polypeptide is L-ribulose-5-phosphate 3-epimerase UlaE (Escherichia coli (strain 55989 / EAEC)).